Reading from the N-terminus, the 173-residue chain is Small ribosomal subunit protein uS9 (173 aa).

A disordered region spans residues 20–53 (SYTTESEVPVEGEYTSESVASRFGEPQPAAGLGR).

Belongs to the universal ribosomal protein uS9 family.

This chain is Small ribosomal subunit protein uS9, found in Streptomyces avermitilis (strain ATCC 31267 / DSM 46492 / JCM 5070 / NBRC 14893 / NCIMB 12804 / NRRL 8165 / MA-4680).